A 214-amino-acid polypeptide reads, in one-letter code: MLRERFLTGGAEAMPDYELLELILFRALPRQDVKPLARRLLDVFGSFGHVLAAPPARLTEVTGVGEAVVQELKIVEAAAQRLARSRVLQRPVLSSWQALLDYCHTAMAHRPTEQFRVLFLDRKNLLIADEEQARGTVDHVPVYPREVVKRALELDASALILVHNHPSGDPTPSQADIAMTDQIRHAAEALGLVLHDHLVIGKGRELSFRAEGLL.

The MPN domain maps to 92 to 214 (VLSSWQALLD…ELSFRAEGLL (123 aa)). Zn(2+) is bound by residues His-163, His-165, and Asp-176. The short motif at 163–176 (HNHPSGDPTPSQAD) is the JAMM motif element.

It belongs to the UPF0758 family.

This is UPF0758 protein from Rhodobacter capsulatus (Rhodopseudomonas capsulata).